The primary structure comprises 315 residues: Ribosomal RNA large subunit methyltransferase F (315 aa).

The protein belongs to the methyltransferase superfamily. METTL16/RlmF family.

Its subcellular location is the cytoplasm. It carries out the reaction adenosine(1618) in 23S rRNA + S-adenosyl-L-methionine = N(6)-methyladenosine(1618) in 23S rRNA + S-adenosyl-L-homocysteine + H(+). Specifically methylates the adenine in position 1618 of 23S rRNA. This Aeromonas salmonicida (strain A449) protein is Ribosomal RNA large subunit methyltransferase F.